We begin with the raw amino-acid sequence, 368 residues long: Anaphase-promoting complex subunit MND2 (368 aa).

Disordered stretches follow at residues 140–167 (AQNAEGNNEEDFRQHDSREEDPRNNGSI) and 286–336 (RNPY…GITP). Over residues 149–162 (EDFRQHDSREEDPR) the composition is skewed to basic and acidic residues. Serine 293 carries the phosphoserine modification.

Belongs to the APC15 family. In terms of assembly, the APC/C is composed of at least 13 subunits that stay tightly associated throughout the cell cycle: APC1, APC2, APC4, APC5, APC9, APC11, CDC16, CDC23, CDC26, CDC27, DOC1, MND2 and SWM1. MND2 interacts directly with APC1, APC5 and CDC23.

Its pathway is protein modification; protein ubiquitination. Functionally, component of the anaphase promoting complex/cyclosome (APC/C), a cell cycle-regulated E3 ubiquitin-protein ligase complex that controls progression through mitosis and the G1 phase of the cell cycle. The APC/C is thought to confer substrate specificity and, in the presence of ubiquitin-conjugating E2 enzymes, it catalyzes the formation of protein-ubiquitin conjugates that are subsequently degraded by the 26S proteasome. In early mitosis, the APC/C is activated by CDC20 and targets securin PDS1, the B-type cyclin CLB5, and other anaphase inhibitory proteins for proteolysis, thereby triggering the separation of sister chromatids at the metaphase-to-anaphase transition. In late mitosis and in G1, degradation of CLB5 allows activation of the APC/C by CDH1, which is needed to destroy CDC20 and the B-type cyclin CLB2 to allow exit from mitosis and creating the low CDK state necessary for cytokinesis and for reforming prereplicative complexes in G1 prior to another round of replication. This is Anaphase-promoting complex subunit MND2 (MND2) from Saccharomyces cerevisiae (strain ATCC 204508 / S288c) (Baker's yeast).